Here is a 95-residue protein sequence, read N- to C-terminus: MDRKEIFERIEQVLAEQLGIPAEQITEEADLREDLGMDSLDLVELVSALEDEVGMRVEQSQLEGIETVGHVMELTLDLVARLATASAADKPEAAS.

In terms of domain architecture, Carrier spans 4–79 (KEIFERIEQV…HVMELTLDLV (76 aa)). Ser-39 bears the O-(pantetheine 4'-phosphoryl)serine mark.

It belongs to the acyl carrier protein (ACP) family. 4'-phosphopantetheine is transferred from CoA to a specific serine of apo-ACP by AcpS. This modification is essential for activity because fatty acids are bound in thioester linkage to the sulfhydryl of the prosthetic group.

It localises to the cytoplasm. Its pathway is lipid metabolism; fatty acid biosynthesis. Its function is as follows. Carrier of the growing fatty acid chain in fatty acid biosynthesis. The chain is Acyl carrier protein from Saccharopolyspora erythraea (strain ATCC 11635 / DSM 40517 / JCM 4748 / NBRC 13426 / NCIMB 8594 / NRRL 2338).